Here is a 423-residue protein sequence, read N- to C-terminus: UDP-N-acetylglucosamine 1-carboxyvinyltransferase (423 aa).

Residue 22–23 (KN) participates in phosphoenolpyruvate binding. Residue R93 coordinates UDP-N-acetyl-alpha-D-glucosamine. C117 functions as the Proton donor in the catalytic mechanism. The residue at position 117 (C117) is a 2-(S-cysteinyl)pyruvic acid O-phosphothioketal. Residues 122–126 (RPVDL), D308, and V330 each bind UDP-N-acetyl-alpha-D-glucosamine.

It belongs to the EPSP synthase family. MurA subfamily.

The protein localises to the cytoplasm. The enzyme catalyses phosphoenolpyruvate + UDP-N-acetyl-alpha-D-glucosamine = UDP-N-acetyl-3-O-(1-carboxyvinyl)-alpha-D-glucosamine + phosphate. Its pathway is cell wall biogenesis; peptidoglycan biosynthesis. Functionally, cell wall formation. Adds enolpyruvyl to UDP-N-acetylglucosamine. The sequence is that of UDP-N-acetylglucosamine 1-carboxyvinyltransferase from Finegoldia magna (strain ATCC 29328 / DSM 20472 / WAL 2508) (Peptostreptococcus magnus).